Here is a 172-residue protein sequence, read N- to C-terminus: Large ribosomal subunit protein uL10 (172 aa).

The protein belongs to the universal ribosomal protein uL10 family. As to quaternary structure, part of the ribosomal stalk of the 50S ribosomal subunit. The N-terminus interacts with L11 and the large rRNA to form the base of the stalk. The C-terminus forms an elongated spine to which L12 dimers bind in a sequential fashion forming a multimeric L10(L12)X complex.

Functionally, forms part of the ribosomal stalk, playing a central role in the interaction of the ribosome with GTP-bound translation factors. The polypeptide is Large ribosomal subunit protein uL10 (Rhodopseudomonas palustris (strain HaA2)).